The primary structure comprises 1052 residues: 3-hydroxy-3-methylglutaryl coenzyme A reductase mokG (1052 aa).

6 helical membrane-spanning segments follow: residues 223-243, 253-273, 279-299, 349-369, 378-398, and 440-460; these read VDMAIIGLGYLALNMTLVSLF, FWLAASVLLSGAFAFVFGLGV, VPVDMLLLSEGIPFLVLTVGF, GWSIVQSYLLEIGALALGAVF, FCFLAAWMVLFDAILLFTFYA, and WKLIMVGGFVLFNVLQLSSFF. Residues 224–403 enclose the SSD domain; sequence DMAIIGLGYL…FTFYATILCV (180 aa). A linker region spans residues 461 to 617; it reads YRIMGGFMTN…FKANQAESLT (157 aa). The segment at 571 to 594 is disordered; that stretch reads APKESAAPAPPSSPASVPSAVPVP. Over residues 584–594 the composition is skewed to low complexity; sequence PASVPSAVPVP. The segment at 618–1044 is catalytic; the sequence is DDELAELCLR…LVNAHMRHNR (427 aa). The active-site Charge relay system is E734. A glycan (N-linked (GlcNAc...) asparagine) is linked at N798. Active-site charge relay system residues include K867 and D943. The active-site Proton donor is H1039. The N-linked (GlcNAc...) asparagine glycan is linked to N1043.

This sequence belongs to the HMG-CoA reductase family.

Its subcellular location is the endoplasmic reticulum membrane. The catalysed reaction is (R)-mevalonate + 2 NADP(+) + CoA = (3S)-3-hydroxy-3-methylglutaryl-CoA + 2 NADPH + 2 H(+). Its pathway is polyketide biosynthesis; lovastatin biosynthesis. HMG-CoA reductase; part of the gene cluster that mediates the biosynthesis of monakolin K, also known as lovastatin, and which acts as a potent competitive inhibitor of HMG-CoA reductase. Monakolin K biosynthesis is performed in two stages. The first stage is catalyzed by the nonaketide synthase mokA, which belongs to type I polyketide synthases and catalyzes the iterative nine-step formation of the polyketide. This PKS stage is completed by the action of dehydrogenase mokE, which catalyzes the NADPH-dependent reduction of the unsaturated tetra-, penta- and heptaketide intermediates that arise during the mokA-mediated biosynthesis of the nonaketide chain and leads to dihydromonacolin L. Covalently bound dihydromonacolin L is released from mokA by the mokD esterase. Conversion of dihydromonacolin L into monacolin L and then monacolin J is subsequently performed with the participation of molecular oxygen and P450 monoogygenase mokC. Finally, mokF performs the conversion of monacoline J to monacoline K through the addition of the side-chain diketide moiety (2R)-2-methylbutanoate produced by the diketide synthase mokB. HMG-CoA reductase mokG may act as a down-regulator of monacolin K production. This chain is 3-hydroxy-3-methylglutaryl coenzyme A reductase mokG, found in Monascus pilosus (Red mold).